The sequence spans 36 residues: Mu/omega-theraphotoxin-Pmu1a (36 aa).

Intrachain disulfides connect cysteine 2–cysteine 16, cysteine 9–cysteine 21, and cysteine 15–cysteine 29.

It belongs to the neurotoxin 10 (Hwtx-1) family. Expressed by the venom gland.

It localises to the secreted. Gating-modifier toxin that targets both voltage-gated sodium and calcium channels, with described activities on human Nav1.7/SCN9A (IC(50)=5.5-7 nM), hNav1.6/SCN10A (IC(50)=9.9 nM), hNav1.4/SCN4A (IC(50)=62.9 nM), hCav3.2/CACNA1H (IC(50)=955.4 nM or 63.5% inhibition at 10 uM), hCav3.1/CACNA1G (95.1% inhibition at 10 uM), hCav3.3/CACNA1I (90.8% inhibition at 10 uM). Acts on Cav3 currents mainly by inducing a strong depolarizing shift in the current-voltage curve. This Pterinochilus murinus (Mombasa golden starburst baboon spider) protein is Mu/omega-theraphotoxin-Pmu1a.